A 345-amino-acid chain; its full sequence is N-acetyl-gamma-glutamyl-phosphate reductase (345 aa).

Cys-149 is a catalytic residue.

The protein belongs to the NAGSA dehydrogenase family. Type 1 subfamily.

It is found in the cytoplasm. It catalyses the reaction N-acetyl-L-glutamate 5-semialdehyde + phosphate + NADP(+) = N-acetyl-L-glutamyl 5-phosphate + NADPH + H(+). It functions in the pathway amino-acid biosynthesis; L-arginine biosynthesis; N(2)-acetyl-L-ornithine from L-glutamate: step 3/4. Its function is as follows. Catalyzes the NADPH-dependent reduction of N-acetyl-5-glutamyl phosphate to yield N-acetyl-L-glutamate 5-semialdehyde. This chain is N-acetyl-gamma-glutamyl-phosphate reductase, found in Bacillus cereus (strain AH187).